The primary structure comprises 263 residues: Proenkephalin-A (263 aa).

An N-terminal signal peptide occupies residues 1–24 (MARFLGLCTWLLALGPGLLATVRA). Cystine bridges form between C26-C48, C30-C52, and C33-C65. 2 consecutive propeptides follow at residues 192–203 (SPHLEDETKELQ) and 213–223 (VGRPEWWMDYQ). The residue at position 247 (S247) is a Phosphoserine.

The protein belongs to the opioid neuropeptide precursor family. In terms of processing, proenkephalin-A is cleaved by CTSL to generate Met-enkephalin. Post-translationally, processed and degraded by ACE. Probably cleaved by ACE. In terms of processing, processed by ACE to generate Met-enkephalin in the nucleus accumbens of the brain. Post-translationally, the N-terminal domain contains 6 conserved cysteines thought to be involved in disulfide bonding and/or processing. Secreted by neuroendocrine chromaffin cells through cromaffin granules.

The protein resides in the cytoplasmic vesicle. It is found in the secretory vesicle. It localises to the chromaffin granule lumen. The protein localises to the secreted. Its function is as follows. Neuropeptide that competes with and mimic the effects of opiate drugs. They play a role in a number of physiologic functions, including pain perception and responses to stress. Functionally, met-enkephalin-Arg-Phe neuropeptide acts as a strong ligand of Mu-type opioid receptor OPRM1. Met-enkephalin-Arg-Phe-binding to OPRM1 in the nucleus accumbens of the brain increases activation of OPRM1, leading to long-term synaptic depression of glutamate release. Increases glutamate release in the striatum and decreases GABA concentration in the striatum. In terms of biological role, increases glutamate release in the striatum. Its function is as follows. Enkelytin possesses antibacterial activity against Gram-positive bacteria such as Micrococcus luteus and Bacillus megaterium. The protein is Proenkephalin-A (PENK) of Bos taurus (Bovine).